The following is an 80-amino-acid chain: Putative membrane protein insertion efficiency factor (80 aa).

The segment at 61 to 80 is disordered; the sequence is KTGKDPVPDRFSLKRNQEGE. Residues 62 to 80 are compositionally biased toward basic and acidic residues; it reads TGKDPVPDRFSLKRNQEGE.

Belongs to the UPF0161 family.

Its subcellular location is the cell membrane. Functionally, could be involved in insertion of integral membrane proteins into the membrane. In Streptococcus pneumoniae (strain P1031), this protein is Putative membrane protein insertion efficiency factor.